Reading from the N-terminus, the 150-residue chain is MTNSFQNSRRDLRERAFQALFNIEMGAELLAASQFAYGYDKVTGEDAQVLELPIFLLSLVMGVNNHKEELDNLISTHLKKGWSLERLTLTDKTLLRLGLFEIKYFDETPDRVALNEIIEVAKKYSDETSAKFINGLLSQYVSEAPSANKS.

This sequence belongs to the NusB family.

Its function is as follows. Involved in transcription antitermination. Required for transcription of ribosomal RNA (rRNA) genes. Binds specifically to the boxA antiterminator sequence of the ribosomal RNA (rrn) operons. The protein is Transcription antitermination protein NusB of Streptococcus pyogenes serotype M4 (strain MGAS10750).